The following is a 173-amino-acid chain: Peptide methionine sulfoxide reductase MsrA (173 aa).

The active site involves cysteine 10.

This sequence belongs to the MsrA Met sulfoxide reductase family.

It catalyses the reaction L-methionyl-[protein] + [thioredoxin]-disulfide + H2O = L-methionyl-(S)-S-oxide-[protein] + [thioredoxin]-dithiol. The catalysed reaction is [thioredoxin]-disulfide + L-methionine + H2O = L-methionine (S)-S-oxide + [thioredoxin]-dithiol. Has an important function as a repair enzyme for proteins that have been inactivated by oxidation. Catalyzes the reversible oxidation-reduction of methionine sulfoxide in proteins to methionine. This Nautilia profundicola (strain ATCC BAA-1463 / DSM 18972 / AmH) protein is Peptide methionine sulfoxide reductase MsrA.